The chain runs to 261 residues: Vacuolar iron transporter (261 aa).

A helical membrane pass occupies residues 66-86 (GQVLIAALAALFAGALSMAVG). Glu-105, Glu-108, Glu-116, Glu-119, and Glu-154 together coordinate Fe cation. The next 3 membrane-spanning stretches (helical) occupy residues 170-190 (MVSFAMFITFGCIPLLVGAWI), 197-217 (IGAITGVSLILLAISGAVGAF), and 233-253 (GGALAMAITIGVGFLSETLNI).

It belongs to the CCC1 family.

It is found in the vacuole membrane. The enzyme catalyses Fe(2+)(in) = Fe(2+)(out). Functionally, vacuolar iron transporter involved in the transfer of iron ions from the cytosol to the vacuole for intracellular iron storage. The polypeptide is Vacuolar iron transporter (Acanthamoeba castellanii (strain ATCC 30010 / Neff)).